We begin with the raw amino-acid sequence, 138 residues long: Cysteine desulfuration protein SufE (138 aa).

Catalysis depends on cysteine 51, which acts as the Cysteine persulfide intermediate.

Belongs to the SufE family. As to quaternary structure, homodimer. Interacts with SufS.

Its subcellular location is the cytoplasm. Its pathway is cofactor biosynthesis; iron-sulfur cluster biosynthesis. Its function is as follows. Participates in cysteine desulfuration mediated by SufS. Cysteine desulfuration mobilizes sulfur from L-cysteine to yield L-alanine and constitutes an essential step in sulfur metabolism for biosynthesis of a variety of sulfur-containing biomolecules. Functions as a sulfur acceptor for SufS, by mediating the direct transfer of the sulfur atom from the S-sulfanylcysteine of SufS, an intermediate product of cysteine desulfuration process. This Pectobacterium atrosepticum (strain SCRI 1043 / ATCC BAA-672) (Erwinia carotovora subsp. atroseptica) protein is Cysteine desulfuration protein SufE.